The chain runs to 229 residues: ATP-dependent dethiobiotin synthetase BioD (229 aa).

12–17 (GVGKTV) is a binding site for ATP. T16 is a binding site for Mg(2+). K37 is an active-site residue. T41 provides a ligand contact to substrate. ATP contacts are provided by residues D53, 112-115 (EGAG), and 201-203 (PAG). Mg(2+) is bound by residues D53 and E112.

Belongs to the dethiobiotin synthetase family. In terms of assembly, homodimer. The cofactor is Mg(2+).

It is found in the cytoplasm. It carries out the reaction (7R,8S)-7,8-diammoniononanoate + CO2 + ATP = (4R,5S)-dethiobiotin + ADP + phosphate + 3 H(+). It functions in the pathway cofactor biosynthesis; biotin biosynthesis; biotin from 7,8-diaminononanoate: step 1/2. In terms of biological role, catalyzes a mechanistically unusual reaction, the ATP-dependent insertion of CO2 between the N7 and N8 nitrogen atoms of 7,8-diaminopelargonic acid (DAPA, also called 7,8-diammoniononanoate) to form a ureido ring. The protein is ATP-dependent dethiobiotin synthetase BioD of Mycobacterium sp. (strain JLS).